The primary structure comprises 439 residues: N5-carboxyaminoimidazole ribonucleotide synthase (439 aa).

ATP-binding positions include Lys-113, Lys-160, 197-200 (EERV), Glu-205, and 283-284 (NE). Residues 117-313 (RRRLAALGAA…QFEQHLRAVL (197 aa)) form the ATP-grasp domain.

This sequence belongs to the PurK/PurT family. As to quaternary structure, homodimer.

It carries out the reaction 5-amino-1-(5-phospho-beta-D-ribosyl)imidazole + hydrogencarbonate + ATP = 5-carboxyamino-1-(5-phospho-D-ribosyl)imidazole + ADP + phosphate + 2 H(+). Its pathway is purine metabolism; IMP biosynthesis via de novo pathway; 5-amino-1-(5-phospho-D-ribosyl)imidazole-4-carboxylate from 5-amino-1-(5-phospho-D-ribosyl)imidazole (N5-CAIR route): step 1/2. Functionally, catalyzes the ATP-dependent conversion of 5-aminoimidazole ribonucleotide (AIR) and HCO(3)(-) to N5-carboxyaminoimidazole ribonucleotide (N5-CAIR). The chain is N5-carboxyaminoimidazole ribonucleotide synthase from Mycobacterium leprae (strain TN).